A 224-amino-acid polypeptide reads, in one-letter code: Glycerol-3-phosphate acyltransferase (224 aa).

5 helical membrane passes run 14–34 (FFPL…FAVI), 64–84 (TAAI…VMLV), 98–118 (MALV…FNFA), 127–147 (LGVL…TWLI), and 160–180 (LTAA…AWYL).

It belongs to the PlsY family. Probably interacts with PlsX.

It localises to the cell inner membrane. It carries out the reaction an acyl phosphate + sn-glycerol 3-phosphate = a 1-acyl-sn-glycero-3-phosphate + phosphate. It participates in lipid metabolism; phospholipid metabolism. Its function is as follows. Catalyzes the transfer of an acyl group from acyl-phosphate (acyl-PO(4)) to glycerol-3-phosphate (G3P) to form lysophosphatidic acid (LPA). This enzyme utilizes acyl-phosphate as fatty acyl donor, but not acyl-CoA or acyl-ACP. The sequence is that of Glycerol-3-phosphate acyltransferase from Albidiferax ferrireducens (strain ATCC BAA-621 / DSM 15236 / T118) (Rhodoferax ferrireducens).